A 185-amino-acid chain; its full sequence is Ribosome maturation factor RimM (185 aa).

Residues 106-185 enclose the PRC barrel domain; the sequence is EGDYYWKDLM…SIEVDWDPGF (80 aa).

Belongs to the RimM family. In terms of assembly, binds ribosomal protein uS19.

It localises to the cytoplasm. Its function is as follows. An accessory protein needed during the final step in the assembly of 30S ribosomal subunit, possibly for assembly of the head region. Essential for efficient processing of 16S rRNA. May be needed both before and after RbfA during the maturation of 16S rRNA. It has affinity for free ribosomal 30S subunits but not for 70S ribosomes. In Shigella dysenteriae serotype 1 (strain Sd197), this protein is Ribosome maturation factor RimM.